Reading from the N-terminus, the 226-residue chain is NADH-quinone oxidoreductase subunit B 2 (226 aa).

Residues C37, C38, C103, and C132 each contribute to the [4Fe-4S] cluster site.

The protein belongs to the complex I 20 kDa subunit family. NDH-1 is composed of 14 different subunits. Subunits NuoB, C, D, E, F, and G constitute the peripheral sector of the complex. [4Fe-4S] cluster serves as cofactor.

It localises to the cell membrane. The catalysed reaction is a quinone + NADH + 5 H(+)(in) = a quinol + NAD(+) + 4 H(+)(out). NDH-1 shuttles electrons from NADH, via FMN and iron-sulfur (Fe-S) centers, to quinones in the respiratory chain. The immediate electron acceptor for the enzyme in this species is believed to be a menaquinone. Couples the redox reaction to proton translocation (for every two electrons transferred, four hydrogen ions are translocated across the cytoplasmic membrane), and thus conserves the redox energy in a proton gradient. In Salinispora arenicola (strain CNS-205), this protein is NADH-quinone oxidoreductase subunit B 2.